The following is an 838-amino-acid chain: Calmodulin-binding transcription activator 6 (838 aa).

The segment at residues V25 to T134 is a DNA-binding region (CG-1). Residues Q525–L554 form an ANK repeat. 3 IQ domains span residues S671 to R700, M713 to V742, and L788 to E817. Residues W738 to L760 are calmodulin-binding. Residues K802–H822 adopt a coiled-coil conformation.

It belongs to the CAMTA family. As to expression, expressed in roots, stems, leaves, sepals, petals, stamen filaments, top of carpels, anthers and siliques, but not in stigmas.

It is found in the nucleus. Functionally, transcription activator that binds calmodulin in a calcium-dependent manner in vitro. Binds to the DNA consensus sequence 5'-[ACG]CGCG[GTC]-3'. Regulates transcriptional activity in response to calcium signals. The chain is Calmodulin-binding transcription activator 6 from Arabidopsis thaliana (Mouse-ear cress).